The sequence spans 311 residues: tRNA-cytidine(32) 2-sulfurtransferase (311 aa).

A PP-loop motif motif is present at residues 47 to 52 (SGGKDS). [4Fe-4S] cluster contacts are provided by Cys122, Cys125, and Cys213.

Belongs to the TtcA family. Homodimer. The cofactor is Mg(2+). [4Fe-4S] cluster is required as a cofactor.

The protein resides in the cytoplasm. It carries out the reaction cytidine(32) in tRNA + S-sulfanyl-L-cysteinyl-[cysteine desulfurase] + AH2 + ATP = 2-thiocytidine(32) in tRNA + L-cysteinyl-[cysteine desulfurase] + A + AMP + diphosphate + H(+). It participates in tRNA modification. Its function is as follows. Catalyzes the ATP-dependent 2-thiolation of cytidine in position 32 of tRNA, to form 2-thiocytidine (s(2)C32). The sulfur atoms are provided by the cysteine/cysteine desulfurase (IscS) system. In Escherichia coli O127:H6 (strain E2348/69 / EPEC), this protein is tRNA-cytidine(32) 2-sulfurtransferase.